Here is a 251-residue protein sequence, read N- to C-terminus: Small ribosomal subunit protein uS4c (251 aa).

2 consecutive S4 RNA-binding domains span residues 110–170 and 189–251; these read MRLD…KLVN and RTLA…QFSE.

Belongs to the universal ribosomal protein uS4 family. Part of the 30S ribosomal subunit. Contacts protein S5. The interaction surface between S4 and S5 is involved in control of translational fidelity.

It localises to the plastid. Its subcellular location is the chloroplast. In terms of biological role, one of the primary rRNA binding proteins, it binds directly to 16S rRNA where it nucleates assembly of the body of the 30S subunit. Its function is as follows. With S5 and S12 plays an important role in translational accuracy. This is Small ribosomal subunit protein uS4c (rps4) from Tetradesmus obliquus (Green alga).